Here is a 101-residue protein sequence, read N- to C-terminus: Small ribosomal subunit protein bS18c (101 aa).

Basic residues predominate over residues 1 to 19; the sequence is MNKSKRPFTKSKRSFRRRL. The disordered stretch occupies residues 1–20; the sequence is MNKSKRPFTKSKRSFRRRLP.

It belongs to the bacterial ribosomal protein bS18 family. As to quaternary structure, part of the 30S ribosomal subunit.

It is found in the plastid. Its subcellular location is the chloroplast. The protein is Small ribosomal subunit protein bS18c of Arabis hirsuta (Hairy rock-cress).